Here is a 378-residue protein sequence, read N- to C-terminus: uncharacterized protein (378 aa).

C16 (for GATase activity) is an active-site residue. Residues 16-378 (CGLFGVIDRS…ELAKQLSEVE (363 aa)) form the Glutamine amidotransferase type-2 domain.

This is an uncharacterized protein from Archaeoglobus fulgidus (strain ATCC 49558 / DSM 4304 / JCM 9628 / NBRC 100126 / VC-16).